The chain runs to 452 residues: Cholesterol 7-desaturase nvd 2 (452 aa).

2 helical membrane-spanning segments follow: residues 6–26 (LIRITVMVITSERLLILMGLC) and 32–52 (FPVMIRVVFNAAVAIVIALVM). Residues 107-212 (WFKVADSTWI…CCEVDGMAYL (106 aa)) form the Rieske domain. The [2Fe-2S] cluster site is built by C148, H150, C169, and H172.

It belongs to the cholesterol 7-desaturase family. The cofactor is [2Fe-2S] cluster.

The protein localises to the membrane. The catalysed reaction is cholesterol + NADPH + O2 + H(+) = 7-dehydrocholesterol + NADP(+) + 2 H2O. The enzyme catalyses cholesterol + NADH + O2 + H(+) = 7-dehydrocholesterol + NAD(+) + 2 H2O. Its pathway is steroid hormone biosynthesis; dafachronic acid biosynthesis. In terms of biological role, catalyzes the production of 7-dehydrocholesterol (7-DHC or cholesta-5,7-dien-3beta-ol) by inserting a double bond (desaturating) at the C7-C8 single bond of cholesterol. Essential regulator of steroid biosynthesis as this reaction is the first step in the synthesis of the steroid hormone Delta(7)-dafachronic acid. The protein is Cholesterol 7-desaturase nvd 2 of Ciona intestinalis (Transparent sea squirt).